Consider the following 870-residue polypeptide: Alanine--tRNA ligase (870 aa).

Zn(2+) contacts are provided by His585, His589, Cys689, and His693.

Belongs to the class-II aminoacyl-tRNA synthetase family. The cofactor is Zn(2+).

The protein localises to the cytoplasm. It catalyses the reaction tRNA(Ala) + L-alanine + ATP = L-alanyl-tRNA(Ala) + AMP + diphosphate. Catalyzes the attachment of alanine to tRNA(Ala) in a two-step reaction: alanine is first activated by ATP to form Ala-AMP and then transferred to the acceptor end of tRNA(Ala). Also edits incorrectly charged Ser-tRNA(Ala) and Gly-tRNA(Ala) via its editing domain. This chain is Alanine--tRNA ligase, found in Picrophilus torridus (strain ATCC 700027 / DSM 9790 / JCM 10055 / NBRC 100828 / KAW 2/3).